A 173-amino-acid chain; its full sequence is Regulatory protein RecX (173 aa).

The protein belongs to the RecX family.

The protein resides in the cytoplasm. Functionally, modulates RecA activity. The sequence is that of Regulatory protein RecX from Mycobacterium marinum (strain ATCC BAA-535 / M).